A 187-amino-acid polypeptide reads, in one-letter code: Benzene 1,2-dioxygenase subunit beta (187 aa).

It belongs to the bacterial ring-hydroxylating dioxygenase beta subunit family. As to quaternary structure, this dioxygenase system consists of four proteins: the two subunits of the hydroxylase component (BnzA and BnzB), a ferredoxin (BnzC) and a ferredoxin reductase (BnzD). [2Fe-2S] cluster is required as a cofactor. The cofactor is Fe cation.

It carries out the reaction benzene + NADH + O2 + H(+) = cis-1,2-dihydrobenzene-1,2-diol + NAD(+). It catalyses the reaction toluene + NADH + O2 + H(+) = (1S,2R)-3-methylcyclohexa-3,5-diene-1,2-diol + NAD(+). It functions in the pathway aromatic compound metabolism; benzene degradation; catechol from benzene: step 1/2. The protein operates within xenobiotic degradation; toluene degradation. Its pathway is xenobiotic degradation; xylene degradation. In terms of biological role, catalyzes both the oxidation of benzene and toluene. The beta subunit may be responsible for the substrate specificity of the enzyme. The chain is Benzene 1,2-dioxygenase subunit beta (bnzB) from Pseudomonas putida (strain ATCC 700007 / DSM 6899 / JCM 31910 / BCRC 17059 / LMG 24140 / F1).